The following is a 380-amino-acid chain: Elongation factor Ts, mitochondrial (380 aa).

This sequence belongs to the EF-Ts family.

It localises to the mitochondrion. Functionally, associates with the EF-Tu.GDP complex and induces the exchange of GDP to GTP. It remains bound to the aminoacyl-tRNA.EF-Tu.GTP complex up to the GTP hydrolysis stage on the ribosome. The chain is Elongation factor Ts, mitochondrial from Plasmodium chabaudi chabaudi.